The chain runs to 86 residues: Kappa-theraphotoxin-Cg1c (86 aa).

Residues 1-21 (MKVSVLITLAVLGVMFVWASA) form the signal peptide. The propeptide occupies 22 to 50 (AELEERGSDHRDSPAWLKSMERIFQSEER). Cystine bridges form between Cys-52–Cys-66, Cys-59–Cys-71, and Cys-65–Cys-78.

It belongs to the neurotoxin 10 (Hwtx-1) family. 28 (Jztx-11) subfamily. In terms of tissue distribution, expressed by the venom gland.

The protein localises to the secreted. Probable ion channel inhibitor. The sequence is that of Kappa-theraphotoxin-Cg1c from Chilobrachys guangxiensis (Chinese earth tiger tarantula).